A 90-amino-acid polypeptide reads, in one-letter code: Small ribosomal subunit protein bS16 (90 aa).

It belongs to the bacterial ribosomal protein bS16 family.

This chain is Small ribosomal subunit protein bS16, found in Lactococcus lactis subsp. cremoris (strain SK11).